A 388-amino-acid chain; its full sequence is Chorismate synthase (388 aa).

NADP(+) contacts are provided by Arg-39 and Arg-45. A disordered region spans residues 95–118; sequence EKNEKSRRVSRPRPGHADLVGGMK. FMN is bound by residues 130–132, 251–252, Gly-296, 311–315, and Arg-337; these read RSS, NA, and KPIPT.

Belongs to the chorismate synthase family. As to quaternary structure, homotetramer. The cofactor is FMNH2.

The catalysed reaction is 5-O-(1-carboxyvinyl)-3-phosphoshikimate = chorismate + phosphate. It functions in the pathway metabolic intermediate biosynthesis; chorismate biosynthesis; chorismate from D-erythrose 4-phosphate and phosphoenolpyruvate: step 7/7. In terms of biological role, catalyzes the anti-1,4-elimination of the C-3 phosphate and the C-6 proR hydrogen from 5-enolpyruvylshikimate-3-phosphate (EPSP) to yield chorismate, which is the branch point compound that serves as the starting substrate for the three terminal pathways of aromatic amino acid biosynthesis. This reaction introduces a second double bond into the aromatic ring system. This chain is Chorismate synthase, found in Listeria monocytogenes serotype 4b (strain CLIP80459).